Here is a 438-residue protein sequence, read N- to C-terminus: Adenosylhomocysteinase (438 aa).

Substrate is bound by residues Thr61, Asp137, and Glu162. 163-165 (TTT) provides a ligand contact to NAD(+). Lys192 and Asp196 together coordinate substrate. NAD(+) is bound by residues Asn197, 226–231 (GYGDVG), Glu249, Asn284, 305–307 (IGH), and Asn352.

This sequence belongs to the adenosylhomocysteinase family. The cofactor is NAD(+).

It localises to the cytoplasm. It carries out the reaction S-adenosyl-L-homocysteine + H2O = L-homocysteine + adenosine. The protein operates within amino-acid biosynthesis; L-homocysteine biosynthesis; L-homocysteine from S-adenosyl-L-homocysteine: step 1/1. Functionally, may play a key role in the regulation of the intracellular concentration of adenosylhomocysteine. The polypeptide is Adenosylhomocysteinase (Christiangramia forsetii (strain DSM 17595 / CGMCC 1.15422 / KT0803) (Gramella forsetii)).